Reading from the N-terminus, the 107-residue chain is Large ribosomal subunit protein uL24 (107 aa).

It belongs to the universal ribosomal protein uL24 family. Part of the 50S ribosomal subunit.

Functionally, one of two assembly initiator proteins, it binds directly to the 5'-end of the 23S rRNA, where it nucleates assembly of the 50S subunit. In terms of biological role, one of the proteins that surrounds the polypeptide exit tunnel on the outside of the subunit. In Pelotomaculum thermopropionicum (strain DSM 13744 / JCM 10971 / SI), this protein is Large ribosomal subunit protein uL24.